Reading from the N-terminus, the 436-residue chain is Chromosomal replication initiator protein DnaA (436 aa).

The segment at 1-69 (MSIFTKIKKS…SELYEKETGI (69 aa)) is domain I, interacts with DnaA modulators. Positions 69–97 (IKPKIDIVTKEISHRPLTIEEIIEPTTPS) are domain II. Residues 98–311 (VLIPEYTFES…GMITKINAMS (214 aa)) form a domain III, AAA+ region region. Residues Gly142, Gly144, Lys145, and Thr146 each coordinate ATP. Positions 312 to 436 (KILGISEITL…KNKIQIKKSE (125 aa)) are domain IV, binds dsDNA.

Belongs to the DnaA family. As to quaternary structure, oligomerizes as a right-handed, spiral filament on DNA at oriC.

It is found in the cytoplasm. Plays an essential role in the initiation and regulation of chromosomal replication. ATP-DnaA binds to the origin of replication (oriC) to initiate formation of the DNA replication initiation complex once per cell cycle. Binds the DnaA box (a 9 base pair repeat at the origin) and separates the double-stranded (ds)DNA. Forms a right-handed helical filament on oriC DNA; dsDNA binds to the exterior of the filament while single-stranded (ss)DNA is stabiized in the filament's interior. The ATP-DnaA-oriC complex binds and stabilizes one strand of the AT-rich DNA unwinding element (DUE), permitting loading of DNA polymerase. After initiation quickly degrades to an ADP-DnaA complex that is not apt for DNA replication. Binds acidic phospholipids. The protein is Chromosomal replication initiator protein DnaA of Nautilia profundicola (strain ATCC BAA-1463 / DSM 18972 / AmH).